Reading from the N-terminus, the 493-residue chain is Malonyl-CoA decarboxylase, mitochondrial (493 aa).

A mitochondrion-targeting transit peptide spans 1 to 39; that stretch reads MRGFGPGLTARRLLPLRLPPRPPGPRLASGQAAGALERA. The alpha-helical domain stretch occupies residues 40–190; the sequence is MDELLRRAVP…VLKGMLSEWF (151 aa). Lysine 59 is subject to N6-acetyllysine. Position 168 is an N6-acetyllysine; alternate (lysine 168). Lysine 168 carries the N6-succinyllysine; alternate modification. Positions 191-493 are catalytic domain; sequence SSGFLNLERV…VAQFQKNSKL (303 aa). The residue at position 211 (lysine 211) is an N6-acetyllysine. Residue lysine 222 is modified to N6-succinyllysine. Residues 299–305 and serine 329 each bind malonyl-CoA; that span reads QGVELGT. The active-site Proton acceptor is the serine 329. Lysine 389 carries the N6-acetyllysine modification. Histidine 423 lines the malonyl-CoA pocket. The Proton donor role is filled by histidine 423. At lysine 472 the chain carries N6-acetyllysine. The Microbody targeting signal motif lies at 491-493; that stretch reads SKL.

As to quaternary structure, homotetramer. Dimer of dimers. The two subunits within a dimer display conformational differences suggesting that at any given moment, only one of the two subunits is competent for malonyl-CoA binding and catalytic activity. Under oxidizing conditions, can form disulfide-linked homotetramers (in vitro). Associates with the peroxisomal targeting signal receptor PEX5. Post-translationally, acetylation at Lys-472 activates malonyl-CoA decarboxylase activity. Deacetylation at Lys-472 by SIRT4 represses activity, leading to promote lipogenesis. Interchain disulfide bonds may form in peroxisomes (Potential). Interchain disulfide bonds are not expected to form in the reducing environment of the cytoplasm and mitochondria. Expressed in fibroblasts and hepatoblastoma cells (at protein level). Expressed strongly in heart, liver, skeletal muscle, kidney and pancreas. Expressed in myotubes. Expressed weakly in brain, placenta, spleen, thymus, testis, ovary and small intestine.

Its subcellular location is the cytoplasm. The protein resides in the mitochondrion matrix. It is found in the peroxisome. It localises to the peroxisome matrix. It carries out the reaction malonyl-CoA + H(+) = acetyl-CoA + CO2. Its pathway is metabolic intermediate biosynthesis; acetyl-CoA biosynthesis; acetyl-CoA from malonyl-CoA: step 1/1. With respect to regulation, malonyl-CoA decarboxylase activity does not require any cofactors or divalent metal ions. Formation of interchain disulfide bonds leads to positive cooperativity between active sites and increases the affinity for malonyl-CoA and the catalytic efficiency (in vitro). In terms of biological role, catalyzes the conversion of malonyl-CoA to acetyl-CoA. In the fatty acid biosynthesis MCD selectively removes malonyl-CoA and thus assures that methyl-malonyl-CoA is the only chain elongating substrate for fatty acid synthase and that fatty acids with multiple methyl side chains are produced. In peroxisomes it may be involved in degrading intraperoxisomal malonyl-CoA, which is generated by the peroxisomal beta-oxidation of odd chain-length dicarboxylic fatty acids. Plays a role in the metabolic balance between glucose and lipid oxidation in muscle independent of alterations in insulin signaling. May play a role in controlling the extent of ischemic injury by promoting glucose oxidation. This is Malonyl-CoA decarboxylase, mitochondrial from Homo sapiens (Human).